Consider the following 600-residue polypeptide: NADH-quinone oxidoreductase subunit C/D (600 aa).

The interval Met-1–Gln-190 is NADH dehydrogenase I subunit C. Residues Asp-214–Arg-600 form an NADH dehydrogenase I subunit D region.

In the N-terminal section; belongs to the complex I 30 kDa subunit family. The protein in the C-terminal section; belongs to the complex I 49 kDa subunit family. NDH-1 is composed of 13 different subunits. Subunits NuoB, CD, E, F, and G constitute the peripheral sector of the complex.

Its subcellular location is the cell inner membrane. The catalysed reaction is a quinone + NADH + 5 H(+)(in) = a quinol + NAD(+) + 4 H(+)(out). Its function is as follows. NDH-1 shuttles electrons from NADH, via FMN and iron-sulfur (Fe-S) centers, to quinones in the respiratory chain. The immediate electron acceptor for the enzyme in this species is believed to be ubiquinone. Couples the redox reaction to proton translocation (for every two electrons transferred, four hydrogen ions are translocated across the cytoplasmic membrane), and thus conserves the redox energy in a proton gradient. This chain is NADH-quinone oxidoreductase subunit C/D, found in Escherichia coli (strain K12 / DH10B).